A 161-amino-acid chain; its full sequence is MADKRIRSDSSAAAVQAMKNAAVDTIDPPSHAGLEKKAEPFWHDNIRSKALDSWTPADLLAAVELANNQLYITVLRKDLRKEERIRGEERDEGLIKDLRKQIVELQRTILAQRRDLQIHSHATNGESRDQKKRNQNDRDARNTKNEHQDQDDNLIAFPKHG.

Positions 37–60 (KAEPFWHDNIRSKALDSWTPADLL) are helix-turn-helix (HTH). Positions 88–115 (EERDEGLIKDLRKQIVELQRTILAQRRD) form a coiled coil. Residues K96, K100, R107, R114, and R128 each coordinate DNA.

It belongs to the Hendrixvirinae small terminase family. As to quaternary structure, homononamer; forms a ring-like structure through which genomic DNA is translocated into the capsid. Interacts with the terminase small subunit; the active complex is composed of a pentamer ring of terminase large subunits and a nonamer ring of terminase small subunits. Binds a specific sequence on the viral genome. DNA transits through the central tunnel formed by the small subunit and sequence-specific recognition for packaging initiation and termination takes place as it emerges.

The terminase small subunit binds to the packaging initiation site and regulates the ATPase activity of the terminase large subunit. The terminase lies at a unique vertex of the procapsid and is composed of two subunits, a small terminase subunit involved in viral DNA recognition (packaging sequence), and a large terminase subunit possessing endonucleolytic and ATPase activities. Both terminase subunits heterooligomerize and are docked on the portal protein to form the packaging machine. Packaging initiates by TerS recognizing the packaging sequence in the viral DNA. The nuclease activity of TerL cuts the viral DNA and the terminase-DNA complex binds to the portal of a procapsid shell. DNA is translocated into the capsid, powered by the packaging ATPase in TerL, which continues until the next site is encountered at which point the motor stops and again cuts the DNA to release the nucleocapsid filled with a unit-length genome ('unit length' packaging). The sequence is that of Terminase, small subunit (1) from Escherichia coli (Bacteriophage HK97).